The sequence spans 270 residues: ATP synthase subunit a (270 aa).

The next 5 membrane-spanning stretches (helical) occupy residues 37–57 (NVHIDSLFFSVLTGMLFLWVF), 98–118 (VAPLALTIFCWVILMNLMDLI), 143–163 (DVNITMAMALGVFALMIYYSI), 217–237 (VVFILIAAMLPWYLQWVGALP), and 239–259 (AIFHILVILIQAFVFMMLTIV).

The protein belongs to the ATPase A chain family. In terms of assembly, F-type ATPases have 2 components, CF(1) - the catalytic core - and CF(0) - the membrane proton channel. CF(1) has five subunits: alpha(3), beta(3), gamma(1), delta(1), epsilon(1). CF(0) has three main subunits: a(1), b(2) and c(9-12). The alpha and beta chains form an alternating ring which encloses part of the gamma chain. CF(1) is attached to CF(0) by a central stalk formed by the gamma and epsilon chains, while a peripheral stalk is formed by the delta and b chains.

The protein localises to the cell inner membrane. Key component of the proton channel; it plays a direct role in the translocation of protons across the membrane. The protein is ATP synthase subunit a of Aliivibrio salmonicida (strain LFI1238) (Vibrio salmonicida (strain LFI1238)).